Here is a 253-residue protein sequence, read N- to C-terminus: Imidazole glycerol phosphate synthase subunit HisF (253 aa).

Catalysis depends on residues aspartate 11 and aspartate 130.

It belongs to the HisA/HisF family. Heterodimer of HisH and HisF.

The protein localises to the cytoplasm. The catalysed reaction is 5-[(5-phospho-1-deoxy-D-ribulos-1-ylimino)methylamino]-1-(5-phospho-beta-D-ribosyl)imidazole-4-carboxamide + L-glutamine = D-erythro-1-(imidazol-4-yl)glycerol 3-phosphate + 5-amino-1-(5-phospho-beta-D-ribosyl)imidazole-4-carboxamide + L-glutamate + H(+). Its pathway is amino-acid biosynthesis; L-histidine biosynthesis; L-histidine from 5-phospho-alpha-D-ribose 1-diphosphate: step 5/9. In terms of biological role, IGPS catalyzes the conversion of PRFAR and glutamine to IGP, AICAR and glutamate. The HisF subunit catalyzes the cyclization activity that produces IGP and AICAR from PRFAR using the ammonia provided by the HisH subunit. This is Imidazole glycerol phosphate synthase subunit HisF from Thermotoga sp. (strain RQ2).